We begin with the raw amino-acid sequence, 621 residues long: Frizzled and smoothened-like protein H (621 aa).

Positions 1–21 are cleaved as a signal peptide; the sequence is MNLKFYNLIFFISFLICCIHG. The Extracellular portion of the chain corresponds to 22 to 246; that stretch reads QRYLPVEGGK…VWNQIFKIND (225 aa). The 140-residue stretch at 27-166 folds into the FZ domain; that stretch reads VEGGKCEKYI…IEWVKYNLTI (140 aa). Disulfide bonds link cysteine 32-cysteine 103 and cysteine 46-cysteine 96. N-linked (GlcNAc...) asparagine glycosylation is found at asparagine 60, asparagine 107, asparagine 163, asparagine 176, and asparagine 206. Residues 247 to 267 traverse the membrane as a helical segment; that stretch reads VLSSISLACTLILLFTFGILN. Over 268–277 the chain is Cytoplasmic; that stretch reads PKLNRFDKKN. Residues 278 to 298 traverse the membrane as a helical segment; sequence LFFIAGVFGMSVSGVLIAANG. The Extracellular portion of the chain corresponds to 299 to 318; sequence SEKTVCPTPERYAVNTDRVC. Residues 319-339 form a helical membrane-spanning segment; the sequence is VASGFLVHFSALFAILWWTIG. The Cytoplasmic portion of the chain corresponds to 340 to 359; that stretch reads LADVYYGIKFVGKKIKIKVR. A helical transmembrane segment spans residues 360–380; that stretch reads YYLLATLTISLAFTLVPLGTG. Topologically, residues 381–400 are extracellular; it reads QYQAGLSNVMCFLKDEIYQS. The chain crosses the membrane as a helical span at residues 401–421; the sequence is MTFFVPLGICLTMGTILMILV. Residues 422 to 464 lie on the Cytoplasmic side of the membrane; sequence MREIYVIVKSNSTSSSFSSSSSKSKSKSKSSDSISYLKLQVKP. Residues 465–485 form a helical membrane-spanning segment; it reads MLNIILFYFTFLYLFLFVRVI. Residues 486-520 are Extracellular-facing; sequence NSRYQEYEDSAIPYMLCLAKGGGDSCRLKGPSAGS. The chain crosses the membrane as a helical span at residues 521-541; sequence LGYFAYCLRIYGIYLFIISFL. The Cytoplasmic portion of the chain corresponds to 542 to 621; it reads SSRTIKIWKE…RNYNTDDDDL (80 aa). Over residues 575–594 the composition is skewed to low complexity; it reads FSSSKNTSTTQNSTLNNTES. Residues 575–603 are disordered; that stretch reads FSSSKNTSTTQNSTLNNTESDTSKRGNSS.

Belongs to the G-protein coupled receptor Fz/Smo family.

The protein resides in the membrane. The polypeptide is Frizzled and smoothened-like protein H (fslH) (Dictyostelium discoideum (Social amoeba)).